A 514-amino-acid chain; its full sequence is UDP-N-acetylmuramyl-tripeptide synthetase (514 aa).

L44 and S46 together coordinate UDP-N-acetyl-alpha-D-muramoyl-L-alanyl-D-glutamate. Position 129–135 (129–135) interacts with ATP; sequence GTNGKTS. UDP-N-acetyl-alpha-D-muramoyl-L-alanyl-D-glutamate is bound by residues 171–172, S198, and R206; that span reads TT. Residue K238 is modified to N6-carboxylysine.

The protein belongs to the MurCDEF family. MurE subfamily. Post-translationally, carboxylation is probably crucial for Mg(2+) binding and, consequently, for the gamma-phosphate positioning of ATP.

The protein resides in the cytoplasm. It functions in the pathway cell wall biogenesis; peptidoglycan biosynthesis. Functionally, catalyzes the addition of an amino acid to the nucleotide precursor UDP-N-acetylmuramoyl-L-alanyl-D-glutamate (UMAG) in the biosynthesis of bacterial cell-wall peptidoglycan. This chain is UDP-N-acetylmuramyl-tripeptide synthetase, found in Leifsonia xyli subsp. xyli (strain CTCB07).